The sequence spans 175 residues: NADH-quinone oxidoreductase subunit I (175 aa).

4Fe-4S ferredoxin-type domains are found at residues 69 to 98 and 115 to 144; these read KRDEQGRERCTSCFCCMWICPADAIYIEAG and KKFEIDLLRCIFCGMCEEACPKGAIYLDGP. The [4Fe-4S] cluster site is built by Cys-78, Cys-81, Cys-84, Cys-88, Cys-124, Cys-127, Cys-130, and Cys-134.

This sequence belongs to the complex I 23 kDa subunit family. In terms of assembly, NDH-1 is composed of 14 different subunits. Subunits NuoA, H, J, K, L, M, N constitute the membrane sector of the complex. [4Fe-4S] cluster is required as a cofactor.

Its subcellular location is the cell inner membrane. It carries out the reaction a quinone + NADH + 5 H(+)(in) = a quinol + NAD(+) + 4 H(+)(out). Functionally, NDH-1 shuttles electrons from NADH, via FMN and iron-sulfur (Fe-S) centers, to quinones in the respiratory chain. The immediate electron acceptor for the enzyme in this species is believed to be ubiquinone. Couples the redox reaction to proton translocation (for every two electrons transferred, four hydrogen ions are translocated across the cytoplasmic membrane), and thus conserves the redox energy in a proton gradient. This Leptospira borgpetersenii serovar Hardjo-bovis (strain JB197) protein is NADH-quinone oxidoreductase subunit I.